The chain runs to 91 residues: DNA-binding protein HU (91 aa).

This sequence belongs to the bacterial histone-like protein family.

Functionally, histone-like DNA-binding protein which is capable of wrapping DNA to stabilize it, and thus to prevent its denaturation under extreme environmental conditions. Also seems to act as a fortuitous virulence factor in delayed sequelae by binding to heparan sulfate-proteoglycans in the extracellular matrix of target organs and acting as a nidus for in situ immune complex formation. In Streptococcus mutans serotype c (strain ATCC 700610 / UA159), this protein is DNA-binding protein HU (hup).